We begin with the raw amino-acid sequence, 361 residues long: Chorismate synthase (361 aa).

Residues Arg-48 and Arg-54 each coordinate NADP(+). FMN contacts are provided by residues 125-127 (RSS), 238-239 (NA), Gly-278, 293-297 (KPTSS), and Arg-319.

This sequence belongs to the chorismate synthase family. In terms of assembly, homotetramer. The cofactor is FMNH2.

It catalyses the reaction 5-O-(1-carboxyvinyl)-3-phosphoshikimate = chorismate + phosphate. Its pathway is metabolic intermediate biosynthesis; chorismate biosynthesis; chorismate from D-erythrose 4-phosphate and phosphoenolpyruvate: step 7/7. Functionally, catalyzes the anti-1,4-elimination of the C-3 phosphate and the C-6 proR hydrogen from 5-enolpyruvylshikimate-3-phosphate (EPSP) to yield chorismate, which is the branch point compound that serves as the starting substrate for the three terminal pathways of aromatic amino acid biosynthesis. This reaction introduces a second double bond into the aromatic ring system. In Yersinia pseudotuberculosis serotype IB (strain PB1/+), this protein is Chorismate synthase.